The sequence spans 499 residues: Neuropeptide CCHamide-1 receptor (499 aa).

Topologically, residues 1-85 (MIANLVSMET…GRRPETYIVP (85 aa)) are extracellular. Residues Asn-33 and Asn-61 are each glycosylated (N-linked (GlcNAc...) asparagine). Residues 86–106 (ILFALIFVVGVLGNGTLIVVF) form a helical membrane-spanning segment. The Cytoplasmic portion of the chain corresponds to 107 to 117 (LSVRQMRNVPN). The helical transmembrane segment at 118–138 (TYILSLALADLLVIITTVPLA) threads the bilayer. The Extracellular segment spans residues 139–162 (STVYTVEYWPYGSFLCSLSEFMKD). Cysteines 154 and 240 form a disulfide. The chain crosses the membrane as a helical span at residues 163–183 (VSIGVSVFTLTALSGDRYFAI). Over 184–203 (VDPLRKFHAHGGGRRATRMT) the chain is Cytoplasmic. The chain crosses the membrane as a helical span at residues 204–224 (LATAVSIWLLAILCGLPALIG). Residues 225 to 259 (SNLKHLGINEKSIVICYPYPEEWGINYAKSMVLLH) are Extracellular-facing. Residues 260-280 (FLVYYAIPLVVIAVFYVLIAL) form a helical membrane-spanning segment. The Cytoplasmic portion of the chain corresponds to 281–309 (HLMYSASVPGEIQGAVRQVRARRKVAVTV). The helical transmembrane segment at 310 to 330 (LAFVVIFGICFLPYHVFFLWF) threads the bilayer. Over 331–348 (YFWPTAQDDYNAFWHVLR) the chain is Extracellular. A helical transmembrane segment spans residues 349 to 369 (IVAYCMSFANSCANPVALYFV). Residues 370–499 (SGAFRKHFNR…PAKFQESLLN (130 aa)) lie on the Cytoplasmic side of the membrane.

Belongs to the G-protein coupled receptor 1 family. Low levels in larval brain and gut with higher levels in adult brain and gut. In the brain expression is widely distributed, including strong expression in the mushroom bodies. Expressed weakly in s-LNv (small ventral lateral neurons) and strongly in l-LNv (large ventral lateral neurons), but not in other clock neurons.

Its subcellular location is the cell membrane. Its function is as follows. Receptor for the neuropeptide CCHamide-1. Plays a role in the modulation of starvation-induced olfactory behavior where starved flies show increased responsiveness to food odorants, repellants and pheromones. Contributes to regulation of sleep latency (the time required to fall asleep), amount of sleep and depth of sleep (arousability). Involved in modulation of PDP1 and PDF levels in s-LNv (small ventral lateral neurons) clock neurons in response to CCHa1 released by DN1a (anterior dorsal neurons 1) clock neurons, to regulate morning activity. In a subset of dopaminergic cells in the protocerebral anterior medial (PAM) cluster involved in suppressing arousability in response to CCHa1 secreted by gut enteroendocrine cells. This Drosophila melanogaster (Fruit fly) protein is Neuropeptide CCHamide-1 receptor.